A 295-amino-acid chain; its full sequence is Protein SSO2 (295 aa).

Topologically, residues 1–269 (MSNANPYENN…ARKARKNKIR (269 aa)) are cytoplasmic. 2 positions are modified to phosphoserine: serine 31 and serine 34. The stretch at 39–100 (AFMNKINSIN…ATDLQYQLKA (62 aa)) forms a coiled coil. Residues 194–256 (LAEVQARHQE…EQGVGHTNKA (63 aa)) enclose the t-SNARE coiled-coil homology domain. The chain crosses the membrane as a helical; Anchor for type IV membrane protein span at residues 270 to 291 (CLIICFIIFAIVVVVVVVPSVV). Topologically, residues 292–295 (ETRK) are extracellular.

This sequence belongs to the syntaxin family.

It localises to the membrane. Required for vesicle fusion with the plasma membrane. This is Protein SSO2 (SSO2) from Saccharomyces cerevisiae (strain ATCC 204508 / S288c) (Baker's yeast).